Reading from the N-terminus, the 508-residue chain is Endoglucanase 6 (508 aa).

Positions 1–33 are cleaved as a signal peptide; the sequence is MLAASLRVEAVAVVAAAVLVLLLSPAAVVVVAG. Asp89 (nucleophile) is an active-site residue. Catalysis depends on residues His419, Asp471, and Glu480.

Belongs to the glycosyl hydrolase 9 (cellulase E) family.

The protein resides in the secreted. The catalysed reaction is Endohydrolysis of (1-&gt;4)-beta-D-glucosidic linkages in cellulose, lichenin and cereal beta-D-glucans.. The sequence is that of Endoglucanase 6 from Oryza sativa subsp. japonica (Rice).